The following is a 458-amino-acid chain: MTREIKPLFGTDGVRGRANHEPMTVEMSVLLGKAVAGVLQECKPGRHRVVVGKDTRLSGYMFENALIAGLTSMGIETLVLGPIPTPGVAFITRAYRADAGIMISASHNPYWDNGIKIFSSEGFKISDVIERRIEQMVAFKEFGNLPEDYAVGKNKRVVDAMGRYIEFAKATFPRGRTLNGLKIVLDCAHGAAYKVAPSVFEELDAEVICYGCEPTGSNINDNCGALFPSVIQKAVIEHKADVGIALDGDGDRIIMVNEKGHIVDGDMILSICANDLKKKGILHGNRIVATVMTNFGVLKYLENVGIDTLISPVGDRHVLQNMLEYEANLGGEQSGHMIFLDYNTTGDGIVSALQVLRIMIESESTLSDLTSPIVKSPQALINVAVKEKIPLDTLPLVQEALRDVRSSLGDSGRVLLRYSGTENICRVMVEGLKKHQVDSLAKTIADIVDSELGVGIIE.

S106 functions as the Phosphoserine intermediate in the catalytic mechanism. Mg(2+) contacts are provided by S106, D247, D249, and D251. The residue at position 106 (S106) is a Phosphoserine.

It belongs to the phosphohexose mutase family. Requires Mg(2+) as cofactor. Post-translationally, activated by phosphorylation.

The catalysed reaction is alpha-D-glucosamine 1-phosphate = D-glucosamine 6-phosphate. In terms of biological role, catalyzes the conversion of glucosamine-6-phosphate to glucosamine-1-phosphate. The sequence is that of Phosphoglucosamine mutase from Chlamydia felis (strain Fe/C-56) (Chlamydophila felis).